Consider the following 202-residue polypeptide: MSKIKLTKNDLKKQKDELKMFKRYLPTLQLKKQQLYMEIVKIENSYKIKNLEQQKLKENISNWISLFSEKFPFESWIQVKTVVKKSLNIAGVAIPIFDSIEYEDIRHDLLFTPYWVDKGIEILKVVIQIDVELKILKKQIDLLLREFRITSQRVNLFEKVMIPTAKANIKKINIYLGDQQTAAVVRGKIAKSSLIKKNRNSL.

It belongs to the V-ATPase D subunit family.

Functionally, produces ATP from ADP in the presence of a proton gradient across the membrane. The polypeptide is V-type ATP synthase subunit D (atpD) (Borreliella burgdorferi (strain ATCC 35210 / DSM 4680 / CIP 102532 / B31) (Borrelia burgdorferi)).